The sequence spans 232 residues: Enterobactin synthase component D (232 aa).

Mg(2+) contacts are provided by Asp-106, Glu-108, and Glu-150.

It belongs to the P-Pant transferase superfamily. EntD family. EntB, EntD, EntE, and EntF form a multienzyme complex called enterobactin synthase. Mg(2+) is required as a cofactor.

Its subcellular location is the membrane. The enzyme catalyses apo-[aryl-carrier protein] + CoA = holo-[aryl-carrier protein] + adenosine 3',5'-bisphosphate + H(+). It catalyses the reaction apo-[peptidyl-carrier protein] + CoA = holo-[peptidyl-carrier protein] + adenosine 3',5'-bisphosphate + H(+). It functions in the pathway siderophore biosynthesis; enterobactin biosynthesis. Functionally, involved in the biosynthesis of the siderophore enterobactin (enterochelin), which is a macrocyclic trimeric lactone of N-(2,3-dihydroxybenzoyl)-serine. The serine trilactone serves as a scaffolding for the three catechol functionalities that provide hexadentate coordination for the tightly ligated iron(2+) atoms. Plays an essential role in the assembly of the enterobactin by catalyzing the transfer of the 4'-phosphopantetheine (Ppant) moiety from coenzyme A to the apo-domains of both EntB (ArCP domain) and EntF (PCP domain) to yield their holo-forms which make them competent for the activation of 2,3-dihydroxybenzoate (DHB) and L-serine, respectively. This Salmonella austin protein is Enterobactin synthase component D.